Here is a 123-residue protein sequence, read N- to C-terminus: Galectin-2 (123 aa).

The Galectin domain occupies 4-123; that stretch reads KVEIMNMDMK…LRYLSVQGGF (120 aa). 65-71 is an a beta-D-galactoside binding site; sequence WGKEQRD.

In terms of assembly, homodimer.

In terms of biological role, this protein binds beta-galactoside. Its physiological function is not yet known. The polypeptide is Galectin-2 (LGALS2) (Sus scrofa (Pig)).